We begin with the raw amino-acid sequence, 489 residues long: Coiled-coil domain-containing protein 77 (489 aa).

Ser38 is modified (phosphoserine). Coiled coils occupy residues 57 to 120 (SQEL…QVCL) and 212 to 487 (ERHQ…NALR).

The chain is Coiled-coil domain-containing protein 77 (Ccdc77) from Mus musculus (Mouse).